Consider the following 436-residue polypeptide: UDP-N-acetylmuramate--L-alanine ligase (436 aa).

ATP is bound at residue 108-114 (GAHGKTS).

It belongs to the MurCDEF family.

It localises to the cytoplasm. The enzyme catalyses UDP-N-acetyl-alpha-D-muramate + L-alanine + ATP = UDP-N-acetyl-alpha-D-muramoyl-L-alanine + ADP + phosphate + H(+). It participates in cell wall biogenesis; peptidoglycan biosynthesis. Its function is as follows. Cell wall formation. The sequence is that of UDP-N-acetylmuramate--L-alanine ligase from Bacillus cereus (strain AH187).